The sequence spans 422 residues: Metallocarboxypeptidase A-like protein TRV_02598 (422 aa).

An N-terminal signal peptide occupies residues 1–16 (MQSLLLLATLLGSALG). Positions 17–119 (GAIPSQSANY…ELLTLDGGAN (103 aa)) are cleaved as a propeptide — activation peptide. The Peptidase M14 domain maps to 125–421 (SYHKYEDHLK…AGVKAMFSKL (297 aa)). Residues histidine 185 and glutamate 188 each coordinate Zn(2+). Substrate is bound by residues 185–188 (HARE), arginine 240, and 256–257 (NR). The cysteines at positions 250 and 273 are disulfide-linked. Histidine 311 contributes to the Zn(2+) binding site. 312 to 313 (SY) serves as a coordination point for substrate. Residue glutamate 387 is the Proton donor/acceptor of the active site.

This sequence belongs to the peptidase M14 family. Zn(2+) serves as cofactor.

It is found in the secreted. Its function is as follows. Extracellular metalloprotease that contributes to pathogenicity. The chain is Metallocarboxypeptidase A-like protein TRV_02598 from Trichophyton verrucosum (strain HKI 0517).